The primary structure comprises 347 residues: GMP reductase (347 aa).

Residue 108–131 (TDFIKLSEILAKSEDLNFICIDIA) participates in NADP(+) binding. K(+) contacts are provided by G181 and G183. C186 serves as the catalytic Thioimidate intermediate. Residue 216-239 (IIGDGGCSCAGDVAKAFGGGADFV) coordinates NADP(+).

This sequence belongs to the IMPDH/GMPR family. GuaC type 1 subfamily. As to quaternary structure, homotetramer.

The enzyme catalyses IMP + NH4(+) + NADP(+) = GMP + NADPH + 2 H(+). Its function is as follows. Catalyzes the irreversible NADPH-dependent deamination of GMP to IMP. It functions in the conversion of nucleobase, nucleoside and nucleotide derivatives of G to A nucleotides, and in maintaining the intracellular balance of A and G nucleotides. The polypeptide is GMP reductase (Shewanella pealeana (strain ATCC 700345 / ANG-SQ1)).